The sequence spans 316 residues: Olfactory receptor 8J1 (316 aa).

Residues 1-25 are Extracellular-facing; it reads MAPENFTRVTEFILTGVSSCPELQI. Residue N5 is glycosylated (N-linked (GlcNAc...) asparagine). The helical transmembrane segment at 26–46 threads the bilayer; sequence PLFLVFLVLYGLTMAGNLGII. Residues 47-54 are Cytoplasmic-facing; that stretch reads TLTSVDSR. The chain crosses the membrane as a helical span at residues 55 to 75; that stretch reads LQTPMYFFLQHLALINLGNST. Residues 76–99 lie on the Extracellular side of the membrane; it reads VIAPKMLINFLVKKKTTSFYECAT. A disulfide bridge links C97 with C189. Residues 100–120 form a helical membrane-spanning segment; that stretch reads QLGGFLFFIVSEVIMLALMAY. The Cytoplasmic segment spans residues 121-139; sequence DRYVAICNPLLYMVVVSRR. Residues 140-160 traverse the membrane as a helical segment; sequence LCLLLVSLTYLYGFSTAIVVS. Residues 161-197 are Extracellular-facing; sequence SYVFSVSYCSSNIINHFYCDNVPLLALSCSDTYLPET. Residues 198–217 form a helical membrane-spanning segment; sequence VVFISAATNVVGSLIIVLVS. Residues 218–237 lie on the Cytoplasmic side of the membrane; it reads YFNIVLSILKICSSEGRKKA. A helical membrane pass occupies residues 238–258; that stretch reads FSTCASHMMAVTIFYGTLLFM. Topologically, residues 259-272 are extracellular; the sequence is YVQPRSNHSLDTDD. A helical transmembrane segment spans residues 273–293; sequence KMASVFYTLVIPMLNPLIYSL. Residues 294-316 lie on the Cytoplasmic side of the membrane; the sequence is RNKDVKTALQRFMTNLCYSFKTM.

Belongs to the G-protein coupled receptor 1 family.

The protein resides in the cell membrane. In terms of biological role, odorant receptor. The chain is Olfactory receptor 8J1 (OR8J1) from Homo sapiens (Human).